The following is a 683-amino-acid chain: DNA ligase (683 aa).

NAD(+) contacts are provided by residues 44–48, 93–94, and Glu127; these read DAEYD and SL. Lys129 acts as the N6-AMP-lysine intermediate in catalysis. Residues Arg150, Glu187, Lys302, and Lys326 each coordinate NAD(+). Zn(2+) contacts are provided by Cys420, Cys423, Cys438, and Cys444. The region spanning 601–683 is the BRCT domain; the sequence is RVGGRLAGLT…SKLLATGGNQ (83 aa).

Belongs to the NAD-dependent DNA ligase family. LigA subfamily. Mg(2+) is required as a cofactor. The cofactor is Mn(2+).

It carries out the reaction NAD(+) + (deoxyribonucleotide)n-3'-hydroxyl + 5'-phospho-(deoxyribonucleotide)m = (deoxyribonucleotide)n+m + AMP + beta-nicotinamide D-nucleotide.. DNA ligase that catalyzes the formation of phosphodiester linkages between 5'-phosphoryl and 3'-hydroxyl groups in double-stranded DNA using NAD as a coenzyme and as the energy source for the reaction. It is essential for DNA replication and repair of damaged DNA. The protein is DNA ligase of Trichlorobacter lovleyi (strain ATCC BAA-1151 / DSM 17278 / SZ) (Geobacter lovleyi).